We begin with the raw amino-acid sequence, 451 residues long: tRNA modification GTPase MnmE (451 aa).

(6S)-5-formyl-5,6,7,8-tetrahydrofolate contacts are provided by Arg-28, Glu-85, and Lys-124. The TrmE-type G domain occupies 220–373; sequence GLYTVLVGPP…LKTRLRTLLL (154 aa). K(+) is bound at residue Asn-230. Residues 230–235, 249–255, and 274–277 each bind GTP; these read NVGKSS, TDVPGTT, and DTAG. Ser-234 contributes to the Mg(2+) binding site. K(+) is bound by residues Thr-249, Val-251, and Thr-254. Residue Thr-255 participates in Mg(2+) binding. Lys-451 contacts (6S)-5-formyl-5,6,7,8-tetrahydrofolate.

It belongs to the TRAFAC class TrmE-Era-EngA-EngB-Septin-like GTPase superfamily. TrmE GTPase family. Homodimer. Heterotetramer of two MnmE and two MnmG subunits. Requires K(+) as cofactor.

Its subcellular location is the cytoplasm. In terms of biological role, exhibits a very high intrinsic GTPase hydrolysis rate. Involved in the addition of a carboxymethylaminomethyl (cmnm) group at the wobble position (U34) of certain tRNAs, forming tRNA-cmnm(5)s(2)U34. The protein is tRNA modification GTPase MnmE of Xylella fastidiosa (strain Temecula1 / ATCC 700964).